The following is a 376-amino-acid chain: N-acetyldiaminopimelate deacetylase (376 aa).

Asp69 is a catalytic residue. The active-site Proton acceptor is the Glu128.

Belongs to the peptidase M20A family. N-acetyldiaminopimelate deacetylase subfamily.

It carries out the reaction N-acetyl-(2S,6S)-2,6-diaminopimelate + H2O = (2S,6S)-2,6-diaminopimelate + acetate. Its pathway is amino-acid biosynthesis; L-lysine biosynthesis via DAP pathway; LL-2,6-diaminopimelate from (S)-tetrahydrodipicolinate (acetylase route): step 3/3. Catalyzes the conversion of N-acetyl-diaminopimelate to diaminopimelate and acetate. The protein is N-acetyldiaminopimelate deacetylase of Bacillus cereus (strain 03BB102).